The sequence spans 425 residues: Dihydroorotase (425 aa).

Positions 56 and 58 each coordinate Zn(2+). Residues 58-60 (HYR) and Asn-90 each bind substrate. Residues Asp-148, His-175, and His-228 each contribute to the Zn(2+) site. Residue Asn-274 participates in substrate binding. Asp-301 provides a ligand contact to Zn(2+). Asp-301 is an active-site residue. Residues His-305 and 319-320 (FG) contribute to the substrate site.

This sequence belongs to the metallo-dependent hydrolases superfamily. DHOase family. Class I DHOase subfamily. It depends on Zn(2+) as a cofactor.

It carries out the reaction (S)-dihydroorotate + H2O = N-carbamoyl-L-aspartate + H(+). The protein operates within pyrimidine metabolism; UMP biosynthesis via de novo pathway; (S)-dihydroorotate from bicarbonate: step 3/3. In terms of biological role, catalyzes the reversible cyclization of carbamoyl aspartate to dihydroorotate. The protein is Dihydroorotase of Lactobacillus acidophilus (strain ATCC 700396 / NCK56 / N2 / NCFM).